We begin with the raw amino-acid sequence, 423 residues long: tRNA(Ile)-lysidine synthase (423 aa).

ATP is bound at residue 18–23; the sequence is SGGADS.

It belongs to the tRNA(Ile)-lysidine synthase family.

It localises to the cytoplasm. The catalysed reaction is cytidine(34) in tRNA(Ile2) + L-lysine + ATP = lysidine(34) in tRNA(Ile2) + AMP + diphosphate + H(+). Its function is as follows. Ligates lysine onto the cytidine present at position 34 of the AUA codon-specific tRNA(Ile) that contains the anticodon CAU, in an ATP-dependent manner. Cytidine is converted to lysidine, thus changing the amino acid specificity of the tRNA from methionine to isoleucine. This is tRNA(Ile)-lysidine synthase from Aromatoleum aromaticum (strain DSM 19018 / LMG 30748 / EbN1) (Azoarcus sp. (strain EbN1)).